Here is a 652-residue protein sequence, read N- to C-terminus: Acetyl-coenzyme A synthetase (652 aa).

Residues R191–R194, T311, and N335 each bind CoA. ATP contacts are provided by residues G387–P389, D411–T416, D500, and R515. CoA is bound at residue S523. R526 serves as a coordination point for ATP. V537, H539, and I542 together coordinate Mg(2+). CoA is bound at residue R584. N6-acetyllysine is present on K609.

It belongs to the ATP-dependent AMP-binding enzyme family. The cofactor is Mg(2+). Acetylated. Deacetylation by the SIR2-homolog deacetylase activates the enzyme.

The catalysed reaction is acetate + ATP + CoA = acetyl-CoA + AMP + diphosphate. Catalyzes the conversion of acetate into acetyl-CoA (AcCoA), an essential intermediate at the junction of anabolic and catabolic pathways. Acs undergoes a two-step reaction. In the first half reaction, Acs combines acetate with ATP to form acetyl-adenylate (AcAMP) intermediate. In the second half reaction, it can then transfer the acetyl group from AcAMP to the sulfhydryl group of CoA, forming the product AcCoA. Its function is as follows. Enables the cell to use acetate during aerobic growth to generate energy via the TCA cycle, and biosynthetic compounds via the glyoxylate shunt. Acetylates CheY, the response regulator involved in flagellar movement and chemotaxis. In Salmonella typhi, this protein is Acetyl-coenzyme A synthetase.